A 133-amino-acid chain; its full sequence is Small ribosomal subunit protein uS8 (133 aa).

Belongs to the universal ribosomal protein uS8 family. Part of the 30S ribosomal subunit. Contacts proteins S5 and S12.

In terms of biological role, one of the primary rRNA binding proteins, it binds directly to 16S rRNA central domain where it helps coordinate assembly of the platform of the 30S subunit. The protein is Small ribosomal subunit protein uS8 of Chlamydia caviae (strain ATCC VR-813 / DSM 19441 / 03DC25 / GPIC) (Chlamydophila caviae).